The chain runs to 205 residues: Methylamine utilization protein MauD (205 aa).

Residues 5–25 form a helical membrane-spanning segment; that stretch reads IMIASNVLLWGAFLALAALML. In terms of domain architecture, Thioredoxin spans 50-184; it reads PDIGERSPVF…VESLFETTRV (135 aa).

The protein resides in the membrane. Its pathway is one-carbon metabolism; methylamine degradation. Its function is as follows. May be specifically involved in the processing, transport, and/or maturation of the MADH beta-subunit. This chain is Methylamine utilization protein MauD (mauD), found in Methylobacillus flagellatus (strain ATCC 51484 / DSM 6875 / VKM B-1610 / KT).